A 424-amino-acid chain; its full sequence is 3-ketoacyl-CoA thiolase A, peroxisomal (424 aa).

Residues Met-1–Cys-26 constitute a peroxisome transit peptide. Residues Met-1–Cys-26 form a PTS2-type peroxisomal targeting signal region. Cys-123 acts as the Acyl-thioester intermediate in catalysis. An N6-acetyllysine mark is found at Lys-173 and Lys-234. Residues His-377 and Cys-408 each act as proton acceptor in the active site.

Belongs to the thiolase-like superfamily. Thiolase family. Homodimer. Interacts (via PTS2-type peroxisomal targeting signal region) with PEX7; leading to its translocation into peroxisomes. Mainly expressed in liver and intestine.

Its subcellular location is the peroxisome. It catalyses the reaction an acyl-CoA + acetyl-CoA = a 3-oxoacyl-CoA + CoA. The catalysed reaction is 2 acetyl-CoA = acetoacetyl-CoA + CoA. It carries out the reaction tetradecanoyl-CoA + acetyl-CoA = 3-oxohexadecanoyl-CoA + CoA. The enzyme catalyses hexanoyl-CoA + acetyl-CoA = 3-oxooctanoyl-CoA + CoA. It catalyses the reaction 3-oxohexadecanedioyl-CoA + CoA = tetradecanedioyl-CoA + acetyl-CoA. The catalysed reaction is 3-oxo-(6Z,9Z,12Z,15Z,18Z,21Z)-tetracosahexaenoyl-CoA + CoA = (4Z,7Z,10Z,13Z,16Z,19Z)-docosahexaenoyl-CoA + acetyl-CoA. It participates in lipid metabolism; peroxisomal fatty acid beta-oxidation. Its function is as follows. Responsible for the thiolytic cleavage of straight chain 3-keto fatty acyl-CoAs (3-oxoacyl-CoAs). Plays an important role in fatty acid peroxisomal beta-oxidation. Catalyzes the cleavage of short, medium, long, and very long straight chain 3-oxoacyl-CoAs. The protein is 3-ketoacyl-CoA thiolase A, peroxisomal of Mus musculus (Mouse).